Reading from the N-terminus, the 144-residue chain is Nucleoside diphosphate kinase (144 aa).

ATP is bound by residues Lys11, Phe59, Arg87, Thr93, Arg104, and Asn114. The active-site Pros-phosphohistidine intermediate is the His117.

The protein belongs to the NDK family. Homotetramer. The cofactor is Mg(2+).

It localises to the cytoplasm. The enzyme catalyses a 2'-deoxyribonucleoside 5'-diphosphate + ATP = a 2'-deoxyribonucleoside 5'-triphosphate + ADP. It carries out the reaction a ribonucleoside 5'-diphosphate + ATP = a ribonucleoside 5'-triphosphate + ADP. Major role in the synthesis of nucleoside triphosphates other than ATP. The ATP gamma phosphate is transferred to the NDP beta phosphate via a ping-pong mechanism, using a phosphorylated active-site intermediate. The sequence is that of Nucleoside diphosphate kinase from Vibrio atlanticus (strain LGP32) (Vibrio splendidus (strain Mel32)).